The chain runs to 93 residues: Phosphoribosyl-ATP pyrophosphatase (93 aa).

This sequence belongs to the PRA-PH family.

The protein resides in the cytoplasm. It carries out the reaction 1-(5-phospho-beta-D-ribosyl)-ATP + H2O = 1-(5-phospho-beta-D-ribosyl)-5'-AMP + diphosphate + H(+). It functions in the pathway amino-acid biosynthesis; L-histidine biosynthesis; L-histidine from 5-phospho-alpha-D-ribose 1-diphosphate: step 2/9. This chain is Phosphoribosyl-ATP pyrophosphatase, found in Mycobacterium leprae (strain Br4923).